Reading from the N-terminus, the 185-residue chain is Dihydrofolate reductase 1 (185 aa).

Residues 8-185 (ELVLVVAADE…QASPRPLDDL (178 aa)) form the DHFR domain.

It belongs to the dihydrofolate reductase family.

It catalyses the reaction (6S)-5,6,7,8-tetrahydrofolate + NADP(+) = 7,8-dihydrofolate + NADPH + H(+). It participates in cofactor biosynthesis; tetrahydrofolate biosynthesis; 5,6,7,8-tetrahydrofolate from 7,8-dihydrofolate: step 1/1. Key enzyme in folate metabolism. Catalyzes an essential reaction for de novo glycine and purine synthesis, and for DNA precursor synthesis. The chain is Dihydrofolate reductase 1 (folA1) from Haloarcula marismortui (strain ATCC 43049 / DSM 3752 / JCM 8966 / VKM B-1809) (Halobacterium marismortui).